Reading from the N-terminus, the 159-residue chain is Ribosomal RNA large subunit methyltransferase H (159 aa).

Residues leucine 76, glycine 108, and 127–132 contribute to the S-adenosyl-L-methionine site; that span reads FSKMTF.

The protein belongs to the RNA methyltransferase RlmH family. In terms of assembly, homodimer.

It is found in the cytoplasm. The enzyme catalyses pseudouridine(1915) in 23S rRNA + S-adenosyl-L-methionine = N(3)-methylpseudouridine(1915) in 23S rRNA + S-adenosyl-L-homocysteine + H(+). Its function is as follows. Specifically methylates the pseudouridine at position 1915 (m3Psi1915) in 23S rRNA. In Clostridium botulinum (strain Kyoto / Type A2), this protein is Ribosomal RNA large subunit methyltransferase H.